Consider the following 276-residue polypeptide: Bis(5'-nucleosyl)-tetraphosphatase, symmetrical (276 aa).

This sequence belongs to the Ap4A hydrolase family.

The enzyme catalyses P(1),P(4)-bis(5'-adenosyl) tetraphosphate + H2O = 2 ADP + 2 H(+). Hydrolyzes diadenosine 5',5'''-P1,P4-tetraphosphate to yield ADP. This is Bis(5'-nucleosyl)-tetraphosphatase, symmetrical from Tolumonas auensis (strain DSM 9187 / NBRC 110442 / TA 4).